A 320-amino-acid chain; its full sequence is Taste receptor type 2 member 129 (320 aa).

The Extracellular portion of the chain corresponds to 1 to 8; it reads MDGIVQNM. A helical membrane pass occupies residues 9 to 29; it reads FTFIVIVEIIIGWIGNGFIAL. Residues 30–55 lie on the Cytoplasmic side of the membrane; that stretch reads VNCIHWYKRRKISALNQILTALAFSR. The chain crosses the membrane as a helical span at residues 56-76; sequence IYLLLTVFTVIAVSTLYTHVL. The Extracellular portion of the chain corresponds to 77–88; the sequence is VTRRVVKLINFH. The chain crosses the membrane as a helical span at residues 89–109; the sequence is LLFSNHFSMWLAACLGLYYFL. Residues 110–128 lie on the Cytoplasmic side of the membrane; that stretch reads KIAHFPNSIFVYLKMRINQ. Residues 129–149 traverse the membrane as a helical segment; sequence VVSGTLLMSLGLLFLNTLLIN. The Extracellular portion of the chain corresponds to 150–185; that stretch reads SYIDTKIDDYREHLLYDFTSNNTASFYRVILVINNC. Asn170 carries N-linked (GlcNAc...) asparagine glycosylation. The chain crosses the membrane as a helical span at residues 186–206; it reads IFTSIPFTLSQSTFLLLIFSL. Over 207-233 the chain is Cytoplasmic; the sequence is WRHYKKMQQHAQRCRDVLADAHIRVLQ. Residues 234–254 form a helical membrane-spanning segment; sequence TMVTYVLLCAIFFLSLSMQIL. Residues 255-264 lie on the Extracellular side of the membrane; that stretch reads RSELLKNILY. Residues 265-285 traverse the membrane as a helical segment; that stretch reads VRFCEIVAAVFPSGHSCVLIC. Residues 286–320 lie on the Cytoplasmic side of the membrane; the sequence is RDTNLRGTFLSVLSWLKQRFTSWIPNINCRSSCIF.

It belongs to the G-protein coupled receptor T2R family.

Its subcellular location is the membrane. In terms of biological role, putative taste receptor which may play a role in the perception of bitterness. This is Taste receptor type 2 member 129 from Mus musculus (Mouse).